The primary structure comprises 156 residues: Small ribosomal subunit protein uS7 (156 aa).

This sequence belongs to the universal ribosomal protein uS7 family. Part of the 30S ribosomal subunit. Contacts proteins S9 and S11.

Functionally, one of the primary rRNA binding proteins, it binds directly to 16S rRNA where it nucleates assembly of the head domain of the 30S subunit. Is located at the subunit interface close to the decoding center, probably blocks exit of the E-site tRNA. This Clostridium botulinum (strain 657 / Type Ba4) protein is Small ribosomal subunit protein uS7.